The sequence spans 637 residues: Neuroendocrine convertase 2 (637 aa).

The first 24 residues, 1–24 (MEGGCGSQWKAAGFLFCVMVFASA), serve as a signal peptide directing secretion. Positions 25–108 (ERPVFTNHFL…QQEGFDRKKR (84 aa)) are excised as a propeptide. Residues 128–452 (QWYLFNTGQA…YGVLDAGAMV (325 aa)) enclose the Peptidase S8 domain. Catalysis depends on charge relay system residues Asp166 and His207. 2 disulfides stabilise this stretch: Cys224–Cys375 and Cys316–Cys346. N-linked (GlcNAc...) asparagine glycosylation occurs at Asn374. Residue Ser383 is the Charge relay system of the active site. Residues 460–596 (TVPERFHCVG…TLMLHGTQSA (137 aa)) form the P/Homo B domain. Cysteines 467 and 493 form a disulfide. N-linked (GlcNAc...) asparagine glycans are attached at residues Asn513 and Asn523.

It belongs to the peptidase S8 family. Furin subfamily.

It is found in the cytoplasmic vesicle. It localises to the secretory vesicle. The protein resides in the secreted. It catalyses the reaction Release of protein hormones and neuropeptides from their precursors, generally by hydrolysis of -Lys-Arg-|- bonds.. Its function is as follows. Serine endopeptidase which is involved in the processing of hormone and other protein precursors at sites comprised of pairs of basic amino acid residues. Responsible for the release of glucagon from proglucagon in pancreatic A cells. The chain is Neuroendocrine convertase 2 (Pcsk2) from Mus musculus (Mouse).